The chain runs to 147 residues: 3-dehydroquinate dehydratase (147 aa).

Tyrosine 23 functions as the Proton acceptor in the catalytic mechanism. Substrate contacts are provided by asparagine 74, histidine 80, and aspartate 87. The active-site Proton donor is the histidine 100. Substrate contacts are provided by residues 101 to 102 (IS) and arginine 111.

It belongs to the type-II 3-dehydroquinase family. As to quaternary structure, homododecamer.

The enzyme catalyses 3-dehydroquinate = 3-dehydroshikimate + H2O. It functions in the pathway metabolic intermediate biosynthesis; chorismate biosynthesis; chorismate from D-erythrose 4-phosphate and phosphoenolpyruvate: step 3/7. In terms of biological role, catalyzes a trans-dehydration via an enolate intermediate. This chain is 3-dehydroquinate dehydratase, found in Prochlorococcus marinus (strain MIT 9301).